The sequence spans 274 residues: Triosephosphate isomerase (274 aa).

31–33 (NWK) is a binding site for substrate. H118 (electrophile) is an active-site residue. The active-site Proton acceptor is E188. Substrate is bound by residues G194, S234, and 255–256 (GG).

It belongs to the triosephosphate isomerase family. In terms of assembly, homodimer.

The protein localises to the cytoplasm. It carries out the reaction D-glyceraldehyde 3-phosphate = dihydroxyacetone phosphate. It participates in carbohydrate biosynthesis; gluconeogenesis. Its pathway is carbohydrate degradation; glycolysis; D-glyceraldehyde 3-phosphate from glycerone phosphate: step 1/1. In terms of biological role, involved in the gluconeogenesis. Catalyzes stereospecifically the conversion of dihydroxyacetone phosphate (DHAP) to D-glyceraldehyde-3-phosphate (G3P). The sequence is that of Triosephosphate isomerase from Chlamydia trachomatis serovar A (strain ATCC VR-571B / DSM 19440 / HAR-13).